Consider the following 510-residue polypeptide: Probable cytosol aminopeptidase (510 aa).

Residues K282 and D287 each coordinate Mn(2+). The active site involves K294. Mn(2+)-binding residues include D305, D364, and E366. The active site involves R368.

This sequence belongs to the peptidase M17 family. It depends on Mn(2+) as a cofactor.

It is found in the cytoplasm. It catalyses the reaction Release of an N-terminal amino acid, Xaa-|-Yaa-, in which Xaa is preferably Leu, but may be other amino acids including Pro although not Arg or Lys, and Yaa may be Pro. Amino acid amides and methyl esters are also readily hydrolyzed, but rates on arylamides are exceedingly low.. The catalysed reaction is Release of an N-terminal amino acid, preferentially leucine, but not glutamic or aspartic acids.. Its function is as follows. Presumably involved in the processing and regular turnover of intracellular proteins. Catalyzes the removal of unsubstituted N-terminal amino acids from various peptides. In Cupriavidus metallidurans (strain ATCC 43123 / DSM 2839 / NBRC 102507 / CH34) (Ralstonia metallidurans), this protein is Probable cytosol aminopeptidase.